Reading from the N-terminus, the 502-residue chain is Lysine--tRNA ligase (502 aa).

Residues glutamate 411 and glutamate 418 each coordinate Mg(2+).

It belongs to the class-II aminoacyl-tRNA synthetase family. In terms of assembly, homodimer. Mg(2+) serves as cofactor.

It localises to the cytoplasm. It carries out the reaction tRNA(Lys) + L-lysine + ATP = L-lysyl-tRNA(Lys) + AMP + diphosphate. This chain is Lysine--tRNA ligase, found in Clostridium kluyveri (strain ATCC 8527 / DSM 555 / NBRC 12016 / NCIMB 10680 / K1).